Reading from the N-terminus, the 361-residue chain is Mitogen-activated protein kinase 14A (361 aa).

The Protein kinase domain occupies 25-309 (YQNLSPVGSG…AAEALAHPYF (285 aa)). Residues 31–39 (VGSGAYGSV) and Lys54 each bind ATP. The Proton acceptor role is filled by Asp169. Thr181 is modified (phosphothreonine; by MAP2K3). The TXY signature appears at 181 to 183 (TGY). A Phosphotyrosine; by MAP2K3 modification is found at Tyr183.

It belongs to the protein kinase superfamily. CMGC Ser/Thr protein kinase family. MAP kinase subfamily. Requires Mg(2+) as cofactor. Dually phosphorylated on Thr-181 and Tyr-183, which activates the enzyme.

Its subcellular location is the cytoplasm. It is found in the nucleus. The catalysed reaction is L-seryl-[protein] + ATP = O-phospho-L-seryl-[protein] + ADP + H(+). The enzyme catalyses L-threonyl-[protein] + ATP = O-phospho-L-threonyl-[protein] + ADP + H(+). With respect to regulation, activated by threonine and tyrosine phosphorylation by the dual specificity kinase, MKK3. Serine/threonine kinase which acts as an essential component of the MAP kinase signal transduction pathway. Mapk14a is one of the four p38 MAPKs which play an important role in the cascades of cellular responses evoked by extracellular stimuli such as pro-inflammatory cytokines or physical stress leading to direct activation of transcription factors. Accordingly, p38 MAPKs phosphorylate a broad range of proteins and it has been estimated that they may have approximately 200 to 300 substrates each. Some of the targets are downstream kinases which are activated through phosphorylation and further phosphorylate additional targets. Required for cytokinesis on the future dorsal side of the blastodisc, suggesting a role in symmetrical and synchronous blastomere cleavage. In Danio rerio (Zebrafish), this protein is Mitogen-activated protein kinase 14A (mapk14a).